The sequence spans 90 residues: Large ribosomal subunit protein uL23c (90 aa).

It belongs to the universal ribosomal protein uL23 family. In terms of assembly, part of the 50S ribosomal subunit.

The protein localises to the plastid. The protein resides in the chloroplast. Binds to 23S rRNA. This Psilotum nudum (Whisk fern) protein is Large ribosomal subunit protein uL23c (rpl23).